A 170-amino-acid polypeptide reads, in one-letter code: MSKAAKKKSSKKRSGSEAAQFDQKTIQEFKEAFGIMDQNKDGIIDKSDLKDLYASMGQIAPDSQIDAMIKEASGPINFTVFLTLFGERLTGTDPEATIVGAFAMFDKKDCGKIKEDDLIKILQNKRGEPLDEDEVKAMYKGKPPIEGGEVDYKAFAHLITTGAQDELASA.

The segment covering 1–13 has biased composition (basic residues); that stretch reads MSKAAKKKSSKKR. The disordered stretch occupies residues 1–22; that stretch reads MSKAAKKKSSKKRSGSEAAQFD. 2 consecutive EF-hand domains span residues 24 to 59 and 93 to 128; these read KTIQ…MGQI and DPEA…KRGE. 4 residues coordinate Ca(2+): D37, N39, D41, and D48.

As to quaternary structure, myosin is a hexamer of 2 heavy chains and 4 light chains (two regulatory light chains and two essential light chains).

In Caenorhabditis elegans, this protein is Myosin regulatory light chain 2 (mlc-2).